The sequence spans 1118 residues: Cytospin-A (1118 aa).

4 disordered regions span residues Met-1–Ala-63, Lys-75–Ser-176, Ser-294–Glu-324, and Ser-359–Glu-391. The segment covering Ser-80–Ala-90 has biased composition (low complexity). A compositionally biased stretch (polar residues) spans Ile-93–Lys-117. Residues Ser-120–Arg-131 show a composition bias toward basic and acidic residues. A compositionally biased stretch (polar residues) spans Asn-133 to Ala-145. Residues Thr-158–Ser-171 show a composition bias toward basic and acidic residues. Residues Lys-168 to Gln-281 are a coiled coil. Residues Ser-294–Gln-304 are compositionally biased toward polar residues. A compositionally biased stretch (low complexity) spans Ser-359–Glu-373. A phosphoserine mark is found at Ser-385, Ser-386, and Ser-390. Coiled-coil stretches lie at residues Ala-395 to Leu-450 and Arg-488 to Val-808. A phosphoserine mark is found at Ser-869, Ser-882, and Ser-888. Positions Thr-921–Arg-999 are disordered. Residues Arg-947 to Ser-957 show a composition bias toward basic and acidic residues. Residues Thr-972–Arg-992 are compositionally biased toward low complexity. Residues Gly-1012–Glu-1117 form the Calponin-homology (CH) domain.

It belongs to the cytospin-A family. In terms of assembly, may interact with both microtubules and actin cytoskeleton.

The protein localises to the cytoplasm. Its subcellular location is the cytoskeleton. It is found in the spindle. The protein resides in the cell junction. It localises to the gap junction. Its function is as follows. Involved in cytokinesis and spindle organization. May play a role in actin cytoskeleton organization and microtubule stabilization and hence required for proper cell adhesion and migration. The chain is Cytospin-A (Specc1l) from Mus musculus (Mouse).